The chain runs to 107 residues: MVIRVFLASSSGFVAIKKKQQDVVRFLEANKIEFEEVDITMSEEQRQWMYKNIPPEKKPAQGNPLPPQIFNDDQYCGDYDSFFESKESNTVFSFLGLKSQLASKAES.

The SH3-binding motif lies at 61 to 67; sequence QGNPLPP.

This sequence belongs to the SH3BGR family.

The protein localises to the nucleus. This Bos taurus (Bovine) protein is SH3 domain-binding glutamic acid-rich-like protein 2 (SH3BGRL2).